The sequence spans 130 residues: Protein YoeA (130 aa).

Residues 1–28 (MLYNIPCRIYILSTLSLCISGIVSTATA) form the signal peptide. The 80-residue stretch at 51 to 130 (NLWESPATIQ…RCRRYSRGER (80 aa)) folds into the TBDR plug domain.

This sequence belongs to the TonB-dependent receptor family.

The protein is Protein YoeA (yoeA) of Escherichia coli (strain K12).